A 181-amino-acid polypeptide reads, in one-letter code: Oligoribonuclease (181 aa).

One can recognise an Exonuclease domain in the interval 8–171; that stretch reads LIWLDMEMTG…ADILESIEEM (164 aa). Residue Y129 is part of the active site.

The protein belongs to the oligoribonuclease family.

The protein resides in the cytoplasm. Functionally, 3'-to-5' exoribonuclease specific for small oligoribonucleotides. The chain is Oligoribonuclease from Chromobacterium violaceum (strain ATCC 12472 / DSM 30191 / JCM 1249 / CCUG 213 / NBRC 12614 / NCIMB 9131 / NCTC 9757 / MK).